The chain runs to 602 residues: MYQGHMQGKGSRAADKAVAMVMKEIPREESAEEKPLLTMTSQLVNEQQESRPLLSPSIDDFLCETKSEAIAKPVTSNTAVLTTGLDLLDLSEPVSQTQTKAKKSESSSKSSSLKKKADGSDLISADAEQRAQALRGPETSSLDLDIQTQLEKWDDVKFHGDRTSKGHLMAERKSCSSRAGSKELLWSSEHRSQPELSTGKSALNSESASELELVAPAQARLTKEHRWGSALLSRNHSLEEEFERAKAAVESDTEFWDKMQAEWEEMARRNWISENQEAQNQVTVSASEKGYYFHTENPFKDWPGAFEEGLKRLKEGDLPVTILFMEAAILQDPGNAEAWQFLGITQAENENEQAAIVALQRCLELQPNNLKALMALAVSYTNTSHQQDACEALKNWIKQNPKYKYLVKNKKGSPGLTRRMSKSPVDSSVLEGVKDLYLEAAHQNGDMIDPDLQTGLGVLFHLSGEFNRAIDAFNAALTVRPEDYSLWNRLGATLANGDRSEEAVEAYTRALEIQPGFIRSRYNLGISCINLGAYREAVSNFLTALSLQRKSRNQQQVPHPAISGNIWAALRIALSLMDQPELFQAANLGDLDVLLRAFNLDP.

Disordered stretches follow at residues 94–140 and 167–206; these read VSQT…PETS and HLMAERKSCSSRAGSKELLWSSEHRSQPELSTGKSALNSE. S181, S229, S233, and S237 each carry phosphoserine. TPR repeat units follow at residues 302–335, 336–369, and 371–403; these read WPGAFEEGLKRLKEGDLPVTILFMEAAILQDPGN, AEAWQFLGITQAENENEQAAIVALQRCLELQPNN, and KALMALAVSYTNTSHQQDACEALKNWIKQNPKY. S421 and S423 each carry phosphoserine. TPR repeat units lie at residues 450 to 483, 485 to 517, and 519 to 551; these read PDLQTGLGVLFHLSGEFNRAIDAFNAALTVRPED, SLWNRLGATLANGDRSEEAVEAYTRALEIQPGF, and RSRYNLGISCINLGAYREAVSNFLTALSLQRKS.

The protein belongs to the peroxisomal targeting signal receptor family. As to quaternary structure, forms an obligate 4:4 complex with HCN2. Interacts with RAB8B. Interacts with HCN3. Interacts with HCN4 with a 4:4 HCN4:PEX5L stoichiometry; reduces the effects of cAMP on the voltage-dependence and rate of activation of HCN4. Brain specific.

It is found in the cytoplasm. The protein localises to the membrane. Its function is as follows. Accessory subunit of hyperpolarization-activated cyclic nucleotide-gated (HCN) channels, regulating their cell-surface expression and cyclic nucleotide dependence. The sequence is that of PEX5-related protein (Pex5l) from Rattus norvegicus (Rat).